A 407-amino-acid polypeptide reads, in one-letter code: BTB/POZ and MATH domain-containing protein 1 (407 aa).

The 135-residue stretch at 33–167 (NGFHEFKICG…ENSLLVRCRV (135 aa)) folds into the MATH domain. Residues 203-270 (CDVVFQVDGE…IYWDELPDMQ (68 aa)) form the BTB domain.

The protein belongs to the Tdpoz family. As to quaternary structure, homodimer or heterodimer with BPM3, BPM5 and BPM6. Interacts with CUL3A and CUL3B. Interacts with RAP2-4 and RAP2-13. Binds to MYB56 at the promoter of FLOWERING LOCUS T (FT). In terms of tissue distribution, ubiquitous.

Its subcellular location is the nucleus. It functions in the pathway protein modification; protein ubiquitination. In terms of biological role, may act as a substrate-specific adapter of an E3 ubiquitin-protein ligase complex (CUL3-RBX1-BTB) which mediates the ubiquitination and subsequent proteasomal degradation of target proteins. This is BTB/POZ and MATH domain-containing protein 1 (BPM1) from Arabidopsis thaliana (Mouse-ear cress).